The following is a 1068-amino-acid chain: Phosphatidylinositol 4,5-bisphosphate 3-kinase catalytic subunit alpha isoform (1068 aa).

A PI3K-ABD domain is found at 16-105 (MPPRILVECL…QPFLKVIEPV (90 aa)). Residues 187-289 (KGQIIVVIWV…GRMPNLMLMA (103 aa)) enclose the PI3K-RBD domain. One can recognise a C2 PI3K-type domain in the interval 330 to 487 (INSALRIKIL…DWFSSVVKFP (158 aa)). A PIK helical domain is found at 517 to 694 (LARDNELREN…GLLLESYCRA (178 aa)). Positions 765-1051 (RLEECRIMSS…QMNDAHHGGW (287 aa)) constitute a PI3K/PI4K catalytic domain. The interval 771–777 (IMSSAKR) is G-loop. The segment at 912 to 920 (GIGDRHNSN) is catalytic loop. The interval 931–957 (HIDFGHFLDHKKKKFGYKRERVPFVLT) is activation loop.

Belongs to the PI3/PI4-kinase family. As to quaternary structure, heterodimer of a catalytic subunit PIK3CA and a p85 regulatory subunit (PIK3R1, PIK3R2 or PIK3R3). Interacts with IRS1 in nuclear extracts. Interacts with RUFY3. Interacts with RASD2. Interacts with APPL1. Interacts with HRAS and KRAS. Interaction with HRAS/KRAS is required for PI3K pathway signaling and cell proliferation stimulated by EGF and FGF2. Interacts with FAM83B; activates the PI3K/AKT signaling cascade.

The catalysed reaction is a 1,2-diacyl-sn-glycero-3-phospho-(1D-myo-inositol-4,5-bisphosphate) + ATP = a 1,2-diacyl-sn-glycero-3-phospho-(1D-myo-inositol-3,4,5-trisphosphate) + ADP + H(+). It carries out the reaction a 1,2-diacyl-sn-glycero-3-phospho-(1D-myo-inositol) + ATP = a 1,2-diacyl-sn-glycero-3-phospho-(1D-myo-inositol-3-phosphate) + ADP + H(+). The enzyme catalyses L-seryl-[protein] + ATP = O-phospho-L-seryl-[protein] + ADP + H(+). It catalyses the reaction 1,2-dioctanoyl-sn-glycero-3-phospho-(1D-myo-inositol-4,5-bisphosphate) + ATP = 1,2-dioctanoyl-sn-glycero-3-phospho-(1D-myo-inositol-3,4,5-trisphosphate) + ADP + H(+). The catalysed reaction is 1-octadecanoyl-2-(5Z,8Z,11Z,14Z)-eicosatetraenoyl-sn-glycero-3-phospho-1D-myo-inositol 4,5-bisphosphate + ATP = 1-octadecanoyl-2-(5Z,8Z,11Z,14Z-eicosatetraenoyl)-sn-glycero-3-phospho-(1D-myo-inositol 3,4,5-triphosphate) + ADP + H(+). Its pathway is phospholipid metabolism; phosphatidylinositol phosphate biosynthesis. Its function is as follows. Phosphoinositide-3-kinase (PI3K) phosphorylates phosphatidylinositol (PI) and its phosphorylated derivatives at position 3 of the inositol ring to produce 3-phosphoinositides. Uses ATP and PtdIns(4,5)P2 (phosphatidylinositol 4,5-bisphosphate) to generate phosphatidylinositol 3,4,5-trisphosphate (PIP3). PIP3 plays a key role by recruiting PH domain-containing proteins to the membrane, including AKT1 and PDPK1, activating signaling cascades involved in cell growth, survival, proliferation, motility and morphology. Participates in cellular signaling in response to various growth factors. Involved in the activation of AKT1 upon stimulation by receptor tyrosine kinases ligands such as EGF, insulin, IGF1, VEGFA and PDGF. Involved in signaling via insulin-receptor substrate (IRS) proteins. Essential in endothelial cell migration during vascular development through VEGFA signaling, possibly by regulating RhoA activity. Required for lymphatic vasculature development, possibly by binding to RAS and by activation by EGF and FGF2, but not by PDGF. Regulates invadopodia formation through the PDPK1-AKT1 pathway. Participates in cardiomyogenesis in embryonic stem cells through a AKT1 pathway. Participates in vasculogenesis in embryonic stem cells through PDK1 and protein kinase C pathway. In addition to its lipid kinase activity, it displays a serine-protein kinase activity that results in the autophosphorylation of the p85alpha regulatory subunit as well as phosphorylation of other proteins such as 4EBP1, H-Ras, the IL-3 beta c receptor and possibly others. Plays a role in the positive regulation of phagocytosis and pinocytosis. This is Phosphatidylinositol 4,5-bisphosphate 3-kinase catalytic subunit alpha isoform (PIK3CA) from Homo sapiens (Human).